The sequence spans 196 residues: Holliday junction branch migration complex subunit RuvA (196 aa).

A domain I region spans residues 1 to 63 (MYDYIKGILT…EDAHLLYGFA (63 aa)). Positions 64-142 (TENEKSVFLS…MSEEAGPVQQ (79 aa)) are domain II. The flexible linker stretch occupies residues 142–146 (QVAPS). The tract at residues 147–196 (SENIALEEAMEAMEALGYRPAELKKIKKFFEGTNDTAENYIKSALKMLMK) is domain III.

It belongs to the RuvA family. In terms of assembly, homotetramer. Forms an RuvA(8)-RuvB(12)-Holliday junction (HJ) complex. HJ DNA is sandwiched between 2 RuvA tetramers; dsDNA enters through RuvA and exits via RuvB. An RuvB hexamer assembles on each DNA strand where it exits the tetramer. Each RuvB hexamer is contacted by two RuvA subunits (via domain III) on 2 adjacent RuvB subunits; this complex drives branch migration. In the full resolvosome a probable DNA-RuvA(4)-RuvB(12)-RuvC(2) complex forms which resolves the HJ.

It localises to the cytoplasm. Functionally, the RuvA-RuvB-RuvC complex processes Holliday junction (HJ) DNA during genetic recombination and DNA repair, while the RuvA-RuvB complex plays an important role in the rescue of blocked DNA replication forks via replication fork reversal (RFR). RuvA specifically binds to HJ cruciform DNA, conferring on it an open structure. The RuvB hexamer acts as an ATP-dependent pump, pulling dsDNA into and through the RuvAB complex. HJ branch migration allows RuvC to scan DNA until it finds its consensus sequence, where it cleaves and resolves the cruciform DNA. This Streptococcus suis (strain 98HAH33) protein is Holliday junction branch migration complex subunit RuvA.